The sequence spans 150 residues: Ribosome maturation factor RimP (150 aa).

It belongs to the RimP family.

It is found in the cytoplasm. In terms of biological role, required for maturation of 30S ribosomal subunits. The protein is Ribosome maturation factor RimP of Thermotoga petrophila (strain ATCC BAA-488 / DSM 13995 / JCM 10881 / RKU-1).